We begin with the raw amino-acid sequence, 161 residues long: Allophycocyanin alpha chain (161 aa).

Asn71 bears the N4-methylasparagine mark. Position 81 (Cys81) interacts with (2R,3E)-phycocyanobilin.

It belongs to the phycobiliprotein family. In terms of assembly, heterodimer of an alpha and a beta chain. Contains one covalently linked phycocyanobilin chromophore.

It localises to the plastid. It is found in the chloroplast thylakoid membrane. Light-harvesting photosynthetic bile pigment-protein from the phycobiliprotein complex. Allophycocyanin has a maximum absorption at approximately 650 nanometers. The chain is Allophycocyanin alpha chain (apcA) from Galdieria sulphuraria (Red alga).